The primary structure comprises 238 residues: 1-(5-phosphoribosyl)-5-[(5-phosphoribosylamino)methylideneamino] imidazole-4-carboxamide isomerase (238 aa).

Asp-8 (proton acceptor) is an active-site residue. Catalysis depends on Asp-129, which acts as the Proton donor.

It belongs to the HisA/HisF family.

The protein resides in the cytoplasm. It carries out the reaction 1-(5-phospho-beta-D-ribosyl)-5-[(5-phospho-beta-D-ribosylamino)methylideneamino]imidazole-4-carboxamide = 5-[(5-phospho-1-deoxy-D-ribulos-1-ylimino)methylamino]-1-(5-phospho-beta-D-ribosyl)imidazole-4-carboxamide. The protein operates within amino-acid biosynthesis; L-histidine biosynthesis; L-histidine from 5-phospho-alpha-D-ribose 1-diphosphate: step 4/9. The sequence is that of 1-(5-phosphoribosyl)-5-[(5-phosphoribosylamino)methylideneamino] imidazole-4-carboxamide isomerase from Jannaschia sp. (strain CCS1).